Reading from the N-terminus, the 197-residue chain is uncharacterized protein (197 aa).

A helical transmembrane segment spans residues 150 to 172 (SLKLNTTLPMFALNLICLLRSIL).

It is found in the membrane. This is an uncharacterized protein from Saccharomyces cerevisiae (strain ATCC 204508 / S288c) (Baker's yeast).